Reading from the N-terminus, the 275-residue chain is Dihydropteroate synthase (275 aa).

Residues 15 to 267 form the Pterin-binding domain; the sequence is PQIMGILNFT…DVAATSDMLK (253 aa). Mg(2+) is bound at residue N22. (7,8-dihydropterin-6-yl)methyl diphosphate is bound by residues T62, D96, N115, D185, K221, and 255-257; that span reads RVH.

This sequence belongs to the DHPS family. In terms of assembly, homodimer. Mg(2+) serves as cofactor.

The enzyme catalyses (7,8-dihydropterin-6-yl)methyl diphosphate + 4-aminobenzoate = 7,8-dihydropteroate + diphosphate. Its pathway is cofactor biosynthesis; tetrahydrofolate biosynthesis; 7,8-dihydrofolate from 2-amino-4-hydroxy-6-hydroxymethyl-7,8-dihydropteridine diphosphate and 4-aminobenzoate: step 1/2. Its function is as follows. Catalyzes the condensation of para-aminobenzoate (pABA) with 6-hydroxymethyl-7,8-dihydropterin diphosphate (DHPt-PP) to form 7,8-dihydropteroate (H2Pte), the immediate precursor of folate derivatives. The polypeptide is Dihydropteroate synthase (folP-A) (Haemophilus influenzae (strain ATCC 51907 / DSM 11121 / KW20 / Rd)).